We begin with the raw amino-acid sequence, 199 residues long: Probable thymidylate kinase (199 aa).

Gly7–Thr14 is a binding site for ATP.

The protein belongs to the thymidylate kinase family.

It carries out the reaction dTMP + ATP = dTDP + ADP. The polypeptide is Probable thymidylate kinase (Halobacterium salinarum (strain ATCC 29341 / DSM 671 / R1)).